Here is a 1494-residue protein sequence, read N- to C-terminus: DNA-directed RNA polymerase subunit beta' (1494 aa).

Zn(2+)-binding residues include C67, C69, C82, and C85. Positions 499, 501, and 503 each coordinate Mg(2+). Zn(2+)-binding residues include C868, C944, C951, and C954.

Belongs to the RNA polymerase beta' chain family. In terms of assembly, the RNAP catalytic core consists of 2 alpha, 1 beta, 1 beta' and 1 omega subunit. When a sigma factor is associated with the core the holoenzyme is formed, which can initiate transcription. It depends on Mg(2+) as a cofactor. Zn(2+) serves as cofactor.

The catalysed reaction is RNA(n) + a ribonucleoside 5'-triphosphate = RNA(n+1) + diphosphate. Its function is as follows. DNA-dependent RNA polymerase catalyzes the transcription of DNA into RNA using the four ribonucleoside triphosphates as substrates. This chain is DNA-directed RNA polymerase subunit beta', found in Chlorobaculum parvum (strain DSM 263 / NCIMB 8327) (Chlorobium vibrioforme subsp. thiosulfatophilum).